The sequence spans 456 residues: Signal recognition particle 54 kDa protein (456 aa).

Residues 104 to 111, 184 to 188, and 242 to 245 contribute to the GTP site; these read GLYGNGKT, DTSGR, and TKMD.

It belongs to the GTP-binding SRP family. SRP54 subfamily. Part of the signal recognition particle protein translocation system, which is composed of SRP and FtsY. Archaeal SRP consists of a 7S RNA molecule of 300 nucleotides and two protein subunits: SRP54 and SRP19.

Its subcellular location is the cytoplasm. It carries out the reaction GTP + H2O = GDP + phosphate + H(+). Its function is as follows. Involved in targeting and insertion of nascent membrane proteins into the cytoplasmic membrane. Binds to the hydrophobic signal sequence of the ribosome-nascent chain (RNC) as it emerges from the ribosomes. The SRP-RNC complex is then targeted to the cytoplasmic membrane where it interacts with the SRP receptor FtsY. This Thermoplasma acidophilum (strain ATCC 25905 / DSM 1728 / JCM 9062 / NBRC 15155 / AMRC-C165) protein is Signal recognition particle 54 kDa protein.